The sequence spans 249 residues: Undecaprenyl-diphosphatase (249 aa).

8 consecutive transmembrane segments (helical) span residues 11–31 (GLTE…TAIF), 35–55 (PDVG…VIFV), 74–94 (ITLS…GIFF), 101–121 (IFSE…FMLL), 135–155 (IPYL…LPGI), 175–195 (AVKY…VLEM), 208–228 (FIVA…MVIA), and 229–249 (GKLK…IFYI).

It belongs to the UppP family.

Its subcellular location is the cell membrane. The enzyme catalyses di-trans,octa-cis-undecaprenyl diphosphate + H2O = di-trans,octa-cis-undecaprenyl phosphate + phosphate + H(+). Its function is as follows. Catalyzes the dephosphorylation of undecaprenyl diphosphate (UPP). In Methanococcus vannielii (strain ATCC 35089 / DSM 1224 / JCM 13029 / OCM 148 / SB), this protein is Undecaprenyl-diphosphatase.